The primary structure comprises 2181 residues: Non-reducing polyketide synthase subA (2181 aa).

An N-terminal acylcarrier protein transacylase domain (SAT) region spans residues 74–180 (QWVKGNSTQP…LALCCGAYID (107 aa)). The region spanning 347 to 779 (QAQLLVLGPV…GTNAAMLVCQ (433 aa)) is the Ketosynthase family 3 (KS3) domain. Active-site for beta-ketoacyl synthase activity residues include Cys525, His661, and His702. The malonyl-CoA:ACP transacylase (MAT) domain stretch occupies residues 891-1193 (VLAGQTGRRV…SFYPAALGEP (303 aa)). The For acyl/malonyl transferase activity role is filled by Ser977. Residues 1269 to 1401 (VSLIGKTQNA…GVITLQEVYS (133 aa)) are N-terminal hotdog fold. The 311-residue stretch at 1269–1579 (VSLIGKTQNA…FQKIAISSLK (311 aa)) folds into the PKS/mFAS DH domain. Residues 1276-1573 (QNAGVQTVEY…TILGAKFQKI (298 aa)) are product template (PT) domain. The interval 1425–1579 (SASVVQGDFI…FQKIAISSLK (155 aa)) is C-terminal hotdog fold. The disordered stretch occupies residues 1652-1673 (ISGSSRSTSSSPPSLESRSQAM). The segment covering 1653–1670 (SGSSRSTSSSPPSLESRS) has biased composition (low complexity). The region spanning 1677–1753 (EITEGAGSAL…TLFHTIFPQQ (77 aa)) is the Carrier domain. Ser1713 carries the post-translational modification O-(pantetheine 4'-phosphoryl)serine. The tract at residues 1982-2164 (EFMNCLFSYN…QSGFGHVDWT (183 aa)) is methyltransferase (CMeT) domain.

It participates in secondary metabolite biosynthesis; terpenoid biosynthesis. In terms of biological role, non-reducing polyketide synthase; part of the gene cluster that mediates the biosynthesis of the immunosuppressants subglutinols, meroterpenoids consisting of an alpha-pyrone (4-hydroxy-5,6-dimethyl-2-pyrone) moiety attached to a decalin core fused to a five-membered cyclic ether carrying a prenylside chain. The first step of the pathway is the synthesis of the alpha-pyrone moiety by the polyketide synthase subA via condensation of one acetyl-CoA starter unit with 3 malonyl-CoA units and 2 methylations. The alpha-pyrone is then combined with geranylgeranyl pyrophosphate (GGPP) formed by the GGPP synthase subD through the action of the prenyltransferase subC to yield a linear alpha-pyrone diterpenoid. Subsequent steps in the subglutinol biosynthetic pathway involve the decalin core formation, which is thought to be initiated by the epoxidation of the C10-C11 olefin by the FAD-dependent oxidoreductase subE. The following cyclization cascade would be catalyzed by the terpene cyclase subB. Lastly, the FAD-dependent dehydrogenase subF probably catalyzes the five-membered cyclic ether formation to complete the formation of subglutinol A. Subsequent redox reactions appear to give rise to subglutinol C and D, however, it remains unclear which enzymes are responsible for these transformations. SubD may have secondary function in the conversion of the identified subglutinols to subglutinol analog 45, which seems to be the major product of the cluster. This Metarhizium robertsii (strain ARSEF 23 / ATCC MYA-3075) (Metarhizium anisopliae (strain ARSEF 23)) protein is Non-reducing polyketide synthase subA.